The following is a 78-amino-acid chain: DNA-directed RNA polymerase subunit Rpo5 (78 aa).

Belongs to the archaeal Rpo5/eukaryotic RPB5 RNA polymerase subunit family. As to quaternary structure, part of the RNA polymerase complex.

The protein resides in the cytoplasm. The catalysed reaction is RNA(n) + a ribonucleoside 5'-triphosphate = RNA(n+1) + diphosphate. In terms of biological role, DNA-dependent RNA polymerase (RNAP) catalyzes the transcription of DNA into RNA using the four ribonucleoside triphosphates as substrates. This is DNA-directed RNA polymerase subunit Rpo5 from Methanosarcina barkeri (strain Fusaro / DSM 804).